The primary structure comprises 177 residues: MIGILNRWRQFGRRYFWPHLLLGMVAASLGVPLNLSGVPDHAALANTSSSQSRQNHGTTNFNSLALLHDIHRRLSFSVDYWQQHALRTVIRHLSFALAPQAAYARVQEVAETERVAPSKIQQLALLDTLNALLTHEFKPPAIIRYTEQVERPVLSPYKPGLWLAQVQGIRAGPANLS.

The signal sequence occupies residues 1-37 (MIGILNRWRQFGRRYFWPHLLLGMVAASLGVPLNLSG).

It belongs to the SecM family.

The protein resides in the cytoplasm. It localises to the cytosol. Its subcellular location is the periplasm. Its function is as follows. Regulates secA expression by translational coupling of the secM secA operon. Translational pausing at a specific Pro residue 5 residues before the end of the protein may allow disruption of a mRNA repressor helix that normally suppresses secA translation initiation. In Yersinia pestis bv. Antiqua (strain Antiqua), this protein is Secretion monitor.